Reading from the N-terminus, the 28-residue chain is M-poneritoxin-Dq4a (28 aa).

Residue Ala-28 is modified to Alanine amide.

In terms of tissue distribution, expressed by the venom gland.

It localises to the secreted. Functionally, the synthetic peptide has weak antimicrobial activity against Gram-negative bacterium E.coli ATCC 10536. It does not show antimicrobial activity against the Gram-positive bacteria B.amyloliquefacies S499, L.monocytogenes 2231 and S.aureus ATCC 29213, against the Gram-negative bacteria P.putida BTP1 and P.aeruginosa PaO1, or against the fungi S.cerevisiae, R.mucilaginosa, C.cucumerinum, F.oxysporum and B.cinerea. The polypeptide is M-poneritoxin-Dq4a (Dinoponera quadriceps (South American ant)).